The sequence spans 282 residues: Putative phosphatase MPN_383 (282 aa).

The active-site Nucleophile is Asp-11. Asp-11 contacts Mg(2+). Leu-12 contacts phosphate. Residue Asp-13 participates in Mg(2+) binding. Residues 45–46 (TG) and Lys-207 each bind phosphate. Asp-230 is a Mg(2+) binding site. Residue Asn-233 coordinates phosphate.

The protein belongs to the HAD-like hydrolase superfamily. Cof family. The cofactor is Mg(2+).

This Mycoplasma pneumoniae (strain ATCC 29342 / M129 / Subtype 1) (Mycoplasmoides pneumoniae) protein is Putative phosphatase MPN_383.